The chain runs to 81 residues: ATP synthase subunit c, chloroplastic (81 aa).

2 helical membrane passes run 7-27 (AASV…PGIG) and 57-77 (LAFM…LLFA).

Belongs to the ATPase C chain family. As to quaternary structure, F-type ATPases have 2 components, F(1) - the catalytic core - and F(0) - the membrane proton channel. F(1) has five subunits: alpha(3), beta(3), gamma(1), delta(1), epsilon(1). F(0) has four main subunits: a(1), b(1), b'(1) and c(10-14). The alpha and beta chains form an alternating ring which encloses part of the gamma chain. F(1) is attached to F(0) by a central stalk formed by the gamma and epsilon chains, while a peripheral stalk is formed by the delta, b and b' chains.

Its subcellular location is the plastid. It localises to the chloroplast thylakoid membrane. Functionally, f(1)F(0) ATP synthase produces ATP from ADP in the presence of a proton or sodium gradient. F-type ATPases consist of two structural domains, F(1) containing the extramembraneous catalytic core and F(0) containing the membrane proton channel, linked together by a central stalk and a peripheral stalk. During catalysis, ATP synthesis in the catalytic domain of F(1) is coupled via a rotary mechanism of the central stalk subunits to proton translocation. In terms of biological role, key component of the F(0) channel; it plays a direct role in translocation across the membrane. A homomeric c-ring of between 10-14 subunits forms the central stalk rotor element with the F(1) delta and epsilon subunits. This chain is ATP synthase subunit c, chloroplastic, found in Pelargonium hortorum (Common geranium).